The primary structure comprises 81 residues: A-kinase anchor protein 7 isoform alpha (81 aa).

Gly-2 carries the N-myristoyl glycine lipid modification. The interval 2-11 (GQLCCFPFAR) is required for membrane localization. S-palmitoyl cysteine attachment occurs at residues Cys-5 and Cys-6. Positions 29 to 42 (LVRLSKRLVENAVL) are RII-binding. The tract at residues 49 to 81 (LEETQNKKQPGEGNSTKAEEGDRNGDGSDNNRK) is disordered. Over residues 65–81 (KAEEGDRNGDGSDNNRK) the composition is skewed to basic and acidic residues.

As to quaternary structure, binds cAMP-dependent protein kinase (PKA). Interacts with PRKCA; only the cytoplasmic form is capable of interacting with PRKCA.

The protein localises to the lateral cell membrane. Functionally, targets the cAMP-dependent protein kinase (PKA) to the plasma membrane, and permits functional coupling to the L-type calcium channel. The membrane-associated form reduces epithelial sodium channel (ENaC) activity, whereas the free cytoplasmic form may negatively regulate ENaC channel feedback inhibition by intracellular sodium. In Mus musculus (Mouse), this protein is A-kinase anchor protein 7 isoform alpha (Akap7).